Reading from the N-terminus, the 356-residue chain is Guanine nucleotide-binding protein alpha-17 subunit (356 aa).

Glycine 2 carries the N-myristoyl glycine lipid modification. Cysteine 4 carries the S-palmitoyl cysteine lipid modification. In terms of domain architecture, G-alpha spans 32 to 356 (SIVKLLLLGA…QKNLQKAGMM (325 aa)). Residues 35 to 48 (KLLLLGAGECGKST) form a G1 motif region. GTP is bound by residues 40–47 (GAGECGKS), 177–183 (LYSRVAT), 202–206 (DVGGQ), 271–274 (NKKD), and alanine 328. Mg(2+) is bound by residues serine 47 and threonine 183. Positions 175-183 (DILYSRVAT) are G2 motif. The interval 198–207 (FRVFDVGGQR) is G3 motif. The tract at residues 267-274 (ILFMNKKD) is G4 motif. The tract at residues 326–331 (TCATDT) is G5 motif.

The protein belongs to the G-alpha family. As to quaternary structure, g proteins are composed of 3 units; alpha, beta and gamma. The alpha chain contains the guanine nucleotide binding site.

Its subcellular location is the cell projection. The protein localises to the cilium. The protein resides in the dendrite. In terms of biological role, guanine nucleotide-binding proteins (G proteins) are involved as modulators or transducers in various transmembrane signaling systems. This specific G-alpha subunit plays an important role in olfaction and in cilia morphogenesis. Involved in chemotactic responses to attractants diacetyl, pyrazine, 2,4,5-trimethylthiazole, benzaldehyde, isoamyl alcohol, butanone and 2,3-pentanedione. Displays a redundant function with gpa-3 in chemotactic responses. Involved in avoidance responses to copper, sodium dodecyl sulfate and linoleic acid. Involved in osmotic avoidance and mechanosensory responses. Involved in specifying fan-like morphology of cilia of head sensory neurons AWC. In Caenorhabditis briggsae, this protein is Guanine nucleotide-binding protein alpha-17 subunit (odr-3).